Reading from the N-terminus, the 291-residue chain is Phosphatidylglycerol--prolipoprotein diacylglyceryl transferase (291 aa).

Helical transmembrane passes span 21–41 (VSLH…MWLA), 60–80 (LLYA…VLFY), 96–116 (WDGG…MIIF), 130–150 (FIAP…FING), 198–218 (SQLY…NLFI), 225–245 (GSVS…VEFF), and 260–280 (ISMG…MMVW). Arg-143 contacts a 1,2-diacyl-sn-glycero-3-phospho-(1'-sn-glycerol).

This sequence belongs to the Lgt family.

It localises to the cell inner membrane. It carries out the reaction L-cysteinyl-[prolipoprotein] + a 1,2-diacyl-sn-glycero-3-phospho-(1'-sn-glycerol) = an S-1,2-diacyl-sn-glyceryl-L-cysteinyl-[prolipoprotein] + sn-glycerol 1-phosphate + H(+). The protein operates within protein modification; lipoprotein biosynthesis (diacylglyceryl transfer). Its function is as follows. Catalyzes the transfer of the diacylglyceryl group from phosphatidylglycerol to the sulfhydryl group of the N-terminal cysteine of a prolipoprotein, the first step in the formation of mature lipoproteins. This chain is Phosphatidylglycerol--prolipoprotein diacylglyceryl transferase, found in Klebsiella pneumoniae (strain 342).